The chain runs to 80 residues: Acyl carrier protein (80 aa).

The Carrier domain occupies 4 to 79 (EEILQKVCSI…DAVKFIEEKK (76 aa)). Serine 39 bears the O-(pantetheine 4'-phosphoryl)serine mark.

Belongs to the acyl carrier protein (ACP) family. 4'-phosphopantetheine is transferred from CoA to a specific serine of apo-ACP by AcpS. This modification is essential for activity because fatty acids are bound in thioester linkage to the sulfhydryl of the prosthetic group.

The protein resides in the cytoplasm. It participates in lipid metabolism; fatty acid biosynthesis. Functionally, carrier of the growing fatty acid chain in fatty acid biosynthesis. This is Acyl carrier protein from Prochlorococcus marinus subsp. pastoris (strain CCMP1986 / NIES-2087 / MED4).